Consider the following 237-residue polypeptide: Octanoyltransferase (237 aa).

The BPL/LPL catalytic domain maps to 27-210; that stretch reads SGGDDILLLL…EFYHIFQPAG (184 aa). Substrate contacts are provided by residues 72–79, 139–141, and 152–154; these read RGGNVTCH, SLG, and GMA. Catalysis depends on C170, which acts as the Acyl-thioester intermediate.

This sequence belongs to the LipB family.

It is found in the cytoplasm. The catalysed reaction is octanoyl-[ACP] + L-lysyl-[protein] = N(6)-octanoyl-L-lysyl-[protein] + holo-[ACP] + H(+). Its pathway is protein modification; protein lipoylation via endogenous pathway; protein N(6)-(lipoyl)lysine from octanoyl-[acyl-carrier-protein]: step 1/2. Catalyzes the transfer of endogenously produced octanoic acid from octanoyl-acyl-carrier-protein onto the lipoyl domains of lipoate-dependent enzymes. Lipoyl-ACP can also act as a substrate although octanoyl-ACP is likely to be the physiological substrate. In Desulfovibrio desulfuricans (strain ATCC 27774 / DSM 6949 / MB), this protein is Octanoyltransferase.